Consider the following 192-residue polypeptide: CASP-like protein 2U1 (192 aa).

Residues 1–11 (MASRKQGAREG) are Cytoplasmic-facing. A helical transmembrane segment spans residues 12–32 (LWSMGVRLLTTLLCITSLILL). The Extracellular portion of the chain corresponds to 33-58 (LKAKQTVRRALGLGYIAQTVKYSDTS). Residues 59 to 79 (GFIYLVYINILVAAYGLIVFV) traverse the membrane as a helical segment. Over 80 to 96 (SLIPSALGKSCSGKCSR) the chain is Cytoplasmic. The chain crosses the membrane as a helical span at residues 97–117 (WTIFVLDQVFAYVLLSAVSAA). Residues 118–145 (TEVLYLADKGMSKTQWEALCPTYGFFCH) lie on the Extracellular side of the membrane. A helical membrane pass occupies residues 146-166 (MVSASVAIGSVAVVLLAVLSV). At 167-192 (SSAQSLFHNFYTRALYTTKMRHSSLT) the chain is on the cytoplasmic side.

Belongs to the Casparian strip membrane proteins (CASP) family. Homodimer and heterodimers.

It is found in the cell membrane. This Adiantum capillus-veneris (Maidenhair fern) protein is CASP-like protein 2U1.